The sequence spans 160 residues: Cytochrome b6-f complex subunit 4 (160 aa).

Residues 1–35 (MATLKKPDLSDPKLRAKLAKGMGHNYYGEPAWPND) lie on the Cytoplasmic side of the membrane. The chain crosses the membrane as a helical span at residues 36–56 (LLYVFPVVIMGTFACIVALSV). Over 57–94 (LDPAMVGEPADPFATPLEILPEWYLYPVFQILRSVPNK) the chain is Lumenal, thylakoid. The chain crosses the membrane as a helical span at residues 95–115 (LLGVLLMASVPLGLILVPFIE). At 116–130 (NVNKFQNPFRRPVAT) the chain is on the cytoplasmic side. Residues 131–151 (TIFLFGTLVTIWLGIGATFPL) traverse the membrane as a helical segment. Residues 152 to 160 (DKTLTLGLF) lie on the Lumenal, thylakoid side of the membrane.

Belongs to the cytochrome b family. PetD subfamily. As to quaternary structure, the 4 large subunits of the cytochrome b6-f complex are cytochrome b6, subunit IV (17 kDa polypeptide, PetD), cytochrome f and the Rieske protein, while the 4 small subunits are PetG, PetL, PetM and PetN. The complex functions as a dimer.

It is found in the cellular thylakoid membrane. Its function is as follows. Component of the cytochrome b6-f complex, which mediates electron transfer between photosystem II (PSII) and photosystem I (PSI), cyclic electron flow around PSI, and state transitions. This is Cytochrome b6-f complex subunit 4 from Mastigocladus laminosus (Fischerella sp.).